The chain runs to 78 residues: Acyl carrier protein AcpP (78 aa).

The Carrier domain maps to serine 2–glutamine 77. At serine 37 the chain carries O-(pantetheine 4'-phosphoryl)serine.

Belongs to the acyl carrier protein (ACP) family. Post-translationally, 4'-phosphopantetheine is transferred from CoA to a specific serine of apo-ACP by AcpS. This modification is essential for activity because fatty acids are bound in thioester linkage to the sulfhydryl of the prosthetic group.

Its subcellular location is the cytoplasm. Its pathway is lipid metabolism; fatty acid biosynthesis. Functionally, carrier of the growing fatty acid chain in fatty acid biosynthesis. The chain is Acyl carrier protein AcpP from Agrobacterium fabrum (strain C58 / ATCC 33970) (Agrobacterium tumefaciens (strain C58)).